Here is a 227-residue protein sequence, read N- to C-terminus: MATWSNLNLQNSSSPLMEQLIFFHDHTLMILLMITVLVAYIMSMLFFNLYTNRFLLEGQTIEIIWTILPAITLIFIALPSLRLLYLLDESMDPLITMKTIGHQWYWSYEYMDFKNIIEFDSYMSALDKLSSFRLLDVDNRTILPMNTQIRTLVTAADVIHSWTVSALGVKTDATPGRLNQINFMINRPGLFYGQCSEICGANHSFMPIVIESVNLKNFINWIKNYSS.

Residues 1–26 lie on the Mitochondrial intermembrane side of the membrane; sequence MATWSNLNLQNSSSPLMEQLIFFHDH. A helical membrane pass occupies residues 27 to 48; that stretch reads TLMILLMITVLVAYIMSMLFFN. The Mitochondrial matrix portion of the chain corresponds to 49-62; the sequence is LYTNRFLLEGQTIE. Residues 63 to 82 form a helical membrane-spanning segment; it reads IIWTILPAITLIFIALPSLR. Residues 83-227 are Mitochondrial intermembrane-facing; sequence LLYLLDESMD…FINWIKNYSS (145 aa). Cu cation contacts are provided by His160, Cys195, Glu197, Cys199, His203, and Met206. Glu197 contributes to the Mg(2+) binding site.

It belongs to the cytochrome c oxidase subunit 2 family. Component of the cytochrome c oxidase (complex IV, CIV), a multisubunit enzyme composed of a catalytic core of 3 subunits and several supernumerary subunits. The complex exists as a monomer or a dimer and forms supercomplexes (SCs) in the inner mitochondrial membrane with ubiquinol-cytochrome c oxidoreductase (cytochrome b-c1 complex, complex III, CIII). Cu cation serves as cofactor.

Its subcellular location is the mitochondrion inner membrane. The enzyme catalyses 4 Fe(II)-[cytochrome c] + O2 + 8 H(+)(in) = 4 Fe(III)-[cytochrome c] + 2 H2O + 4 H(+)(out). Its function is as follows. Component of the cytochrome c oxidase, the last enzyme in the mitochondrial electron transport chain which drives oxidative phosphorylation. The respiratory chain contains 3 multisubunit complexes succinate dehydrogenase (complex II, CII), ubiquinol-cytochrome c oxidoreductase (cytochrome b-c1 complex, complex III, CIII) and cytochrome c oxidase (complex IV, CIV), that cooperate to transfer electrons derived from NADH and succinate to molecular oxygen, creating an electrochemical gradient over the inner membrane that drives transmembrane transport and the ATP synthase. Cytochrome c oxidase is the component of the respiratory chain that catalyzes the reduction of oxygen to water. Electrons originating from reduced cytochrome c in the intermembrane space (IMS) are transferred via the dinuclear copper A center (CU(A)) of subunit 2 and heme A of subunit 1 to the active site in subunit 1, a binuclear center (BNC) formed by heme A3 and copper B (CU(B)). The BNC reduces molecular oxygen to 2 water molecules using 4 electrons from cytochrome c in the IMS and 4 protons from the mitochondrial matrix. In Acheta domesticus (House cricket), this protein is Cytochrome c oxidase subunit 2 (COII).